A 280-amino-acid chain; its full sequence is Purine nucleoside phosphorylase (280 aa).

Phosphate is bound by residues Ser15 and 55–56 (RH). Met194 provides a ligand contact to substrate. Thr195 lines the phosphate pocket. Substrate is bound at residue 218–220 (DLD).

This sequence belongs to the PNP/MTAP phosphorylase family. MTAP subfamily. As to quaternary structure, homohexamer. Dimer of a homotrimer.

It carries out the reaction a purine D-ribonucleoside + phosphate = a purine nucleobase + alpha-D-ribose 1-phosphate. It functions in the pathway purine metabolism; purine nucleoside salvage. Purine nucleoside phosphorylase involved in purine salvage. The protein is Purine nucleoside phosphorylase of Streptomyces coelicolor (strain ATCC BAA-471 / A3(2) / M145).